The primary structure comprises 542 residues: Formate--tetrahydrofolate ligase (542 aa).

53 to 60 (TPAGEGKT) provides a ligand contact to ATP.

It belongs to the formate--tetrahydrofolate ligase family.

It catalyses the reaction (6S)-5,6,7,8-tetrahydrofolate + formate + ATP = (6R)-10-formyltetrahydrofolate + ADP + phosphate. It functions in the pathway one-carbon metabolism; tetrahydrofolate interconversion. In Thermotoga maritima (strain ATCC 43589 / DSM 3109 / JCM 10099 / NBRC 100826 / MSB8), this protein is Formate--tetrahydrofolate ligase.